A 96-amino-acid chain; its full sequence is Large ribosomal subunit protein eL14 (96 aa).

It belongs to the eukaryotic ribosomal protein eL14 family.

This Sulfolobus acidocaldarius (strain ATCC 33909 / DSM 639 / JCM 8929 / NBRC 15157 / NCIMB 11770) protein is Large ribosomal subunit protein eL14.